The following is a 235-amino-acid chain: tRNA (guanine-N(1)-)-methyltransferase (235 aa).

Residues glycine 114 and 134-139 (IGDYIL) contribute to the S-adenosyl-L-methionine site.

Belongs to the RNA methyltransferase TrmD family. In terms of assembly, homodimer.

The protein localises to the cytoplasm. The enzyme catalyses guanosine(37) in tRNA + S-adenosyl-L-methionine = N(1)-methylguanosine(37) in tRNA + S-adenosyl-L-homocysteine + H(+). In terms of biological role, specifically methylates guanosine-37 in various tRNAs. This Ehrlichia ruminantium (strain Welgevonden) protein is tRNA (guanine-N(1)-)-methyltransferase.